We begin with the raw amino-acid sequence, 430 residues long: Adenylosuccinate synthetase (430 aa).

GTP is bound by residues 12–18 (GDEGKGK) and 40–42 (GHT). The Proton acceptor role is filled by Asp-13. The Mg(2+) site is built by Asp-13 and Gly-40. IMP contacts are provided by residues 13-16 (DEGK), 38-41 (NAGH), Thr-128, Arg-142, Gln-223, Thr-238, and Arg-302. His-41 (proton donor) is an active-site residue. Position 298–304 (298–304 (VNTGRKR)) interacts with substrate. GTP contacts are provided by residues Arg-304, 330–332 (KLD), and 412–414 (GVG).

The protein belongs to the adenylosuccinate synthetase family. Homodimer. Mg(2+) serves as cofactor.

The protein localises to the cytoplasm. It carries out the reaction IMP + L-aspartate + GTP = N(6)-(1,2-dicarboxyethyl)-AMP + GDP + phosphate + 2 H(+). It participates in purine metabolism; AMP biosynthesis via de novo pathway; AMP from IMP: step 1/2. Plays an important role in the de novo pathway of purine nucleotide biosynthesis. Catalyzes the first committed step in the biosynthesis of AMP from IMP. This chain is Adenylosuccinate synthetase, found in Corynebacterium aurimucosum (strain ATCC 700975 / DSM 44827 / CIP 107346 / CN-1) (Corynebacterium nigricans).